An 89-amino-acid chain; its full sequence is Exodeoxyribonuclease 7 small subunit (89 aa).

The interval 1 to 23 is disordered; the sequence is MRPWRCVSMAKAPAAPSSTQPDP.

It belongs to the XseB family. Heterooligomer composed of large and small subunits.

It is found in the cytoplasm. The enzyme catalyses Exonucleolytic cleavage in either 5'- to 3'- or 3'- to 5'-direction to yield nucleoside 5'-phosphates.. In terms of biological role, bidirectionally degrades single-stranded DNA into large acid-insoluble oligonucleotides, which are then degraded further into small acid-soluble oligonucleotides. The polypeptide is Exodeoxyribonuclease 7 small subunit (Acidovorax sp. (strain JS42)).